The following is a 281-amino-acid chain: 1-acyl-sn-glycerol-3-phosphate acyltransferase (281 aa).

3 consecutive transmembrane segments (helical) span residues 40–60 (IFVC…IMVL), 71–91 (LGNL…GIPI), and 110–130 (ASPI…VGVA). Positions 109–114 (HASPID) match the HXXXXD motif motif.

It belongs to the 1-acyl-sn-glycerol-3-phosphate acyltransferase family.

Its subcellular location is the membrane. It catalyses the reaction a 1-acyl-sn-glycero-3-phosphate + an acyl-CoA = a 1,2-diacyl-sn-glycero-3-phosphate + CoA. The protein operates within phospholipid metabolism; CDP-diacylglycerol biosynthesis; CDP-diacylglycerol from sn-glycerol 3-phosphate: step 2/3. Its function is as follows. Converts lysophosphatidic acid (LPA) into phosphatidic acid by incorporating acyl moiety at the 2 position. This enzyme uses erucoyl-CoA as an acyl donor. The protein is 1-acyl-sn-glycerol-3-phosphate acyltransferase (PLSC) of Limnanthes douglasii (Douglas' meadowfoam).